Reading from the N-terminus, the 294-residue chain is Glucosamine kinase GspK (294 aa).

Thr12 contributes to the ATP binding site. Asp101 serves as a coordination point for substrate. Thr122 lines the ATP pocket. Residues 139–141 (GRE) and Asp146 contribute to the substrate site. Gly202 provides a ligand contact to ATP.

The protein belongs to the eukaryotic-type N-acetylglucosamine kinase family.

Its subcellular location is the cytoplasm. It catalyses the reaction D-glucosamine + ATP = D-glucosamine 6-phosphate + ADP + H(+). Its function is as follows. ATP-dependent kinase, which is specific for glucosamine. Does not show kinase activity with any other sugar. This is Glucosamine kinase GspK (gspK) from Vibrio cholerae serotype O1 (strain ATCC 39315 / El Tor Inaba N16961).